Reading from the N-terminus, the 300-residue chain is Acetylglutamate kinase (300 aa).

Substrate-binding positions include 73 to 74 (GG), arginine 95, and asparagine 197.

Belongs to the acetylglutamate kinase family. ArgB subfamily.

Its subcellular location is the cytoplasm. It carries out the reaction N-acetyl-L-glutamate + ATP = N-acetyl-L-glutamyl 5-phosphate + ADP. The protein operates within amino-acid biosynthesis; L-arginine biosynthesis; N(2)-acetyl-L-ornithine from L-glutamate: step 2/4. In terms of biological role, catalyzes the ATP-dependent phosphorylation of N-acetyl-L-glutamate. The protein is Acetylglutamate kinase of Bordetella pertussis (strain Tohama I / ATCC BAA-589 / NCTC 13251).